Consider the following 66-residue polypeptide: DNA-directed RNA polymerase subunit omega (66 aa).

Belongs to the RNA polymerase subunit omega family. In terms of assembly, the RNAP catalytic core consists of 2 alpha, 1 beta, 1 beta' and 1 omega subunit. When a sigma factor is associated with the core the holoenzyme is formed, which can initiate transcription.

It carries out the reaction RNA(n) + a ribonucleoside 5'-triphosphate = RNA(n+1) + diphosphate. Functionally, promotes RNA polymerase assembly. Latches the N- and C-terminal regions of the beta' subunit thereby facilitating its interaction with the beta and alpha subunits. This chain is DNA-directed RNA polymerase subunit omega, found in Clostridium botulinum (strain Eklund 17B / Type B).